The chain runs to 327 residues: Transcription factor bHLH48 (327 aa).

The segment at 137 to 179 is disordered; the sequence is EPAETDSMVENQNQSYSSGKRKEREKKVKSSTKKNKSSVESDK. The 51-residue stretch at 191–241 folds into the bHLH domain; sequence QATDNHSLAERARREKINARMKLLQELVPGCDKIQGTALVLDEIINHVQTL.

Homodimer. Expressed in leaves, stems, and flowers.

It is found in the nucleus. This Arabidopsis thaliana (Mouse-ear cress) protein is Transcription factor bHLH48 (BHLH48).